Reading from the N-terminus, the 198-residue chain is Capsid protein (198 aa).

Its subcellular location is the virion. The polypeptide is Capsid protein (Vitis vinifera (Grape)).